Reading from the N-terminus, the 801-residue chain is Glycerol-3-phosphate acyltransferase 2, mitochondrial (801 aa).

The disordered stretch occupies residues 1–24 (MDTMLKSNPQTQQRSNHNGQETSL). At 1–305 (MDTMLKSNPQ…PGPRLSALGQ (305 aa)) the chain is on the cytoplasmic side. Positions 180–290 (QLHKGQMKMV…SGQPLLIFLE (111 aa)) are acyltransferase. The HXXXXD motif signature appears at 205-210 (HKSLLD). A helical membrane pass occupies residues 306–332 (AWLGVVIQAVQAGIISDATLVPVAIAY). Over 333-449 (DLVPDAPCNM…QLLVRRLSRH (117 aa)) the chain is Mitochondrial intermembrane. Residues 450-472 (VLSASVASSAVMSTAIMATLLLL) traverse the membrane as a helical segment. The Cytoplasmic segment spans residues 473-801 (KHQKGVVLSQ…EQFIRQFICS (329 aa)). Residue Ser-662 is modified to Phosphoserine. Thr-666 bears the Phosphothreonine mark. A phosphoserine mark is found at Ser-668 and Ser-670.

It belongs to the GPAT/DAPAT family. In terms of assembly, interacts with PIWIL2. In terms of tissue distribution, highly expressed in the testis. Expressed at lower levels in the heart, liver, kidney, spleen and adipose cells. Only detected in primary spermatocytes.

Its subcellular location is the mitochondrion outer membrane. It catalyses the reaction sn-glycerol 3-phosphate + an acyl-CoA = a 1-acyl-sn-glycero-3-phosphate + CoA. It carries out the reaction a 1-acyl-sn-glycero-3-phosphate + an acyl-CoA = a 1,2-diacyl-sn-glycero-3-phosphate + CoA. The catalysed reaction is 1-(9Z-octadecenoyl)-sn-glycero-3-phosphate + (9Z)-octadecenoyl-CoA = 1,2-di-(9Z-octadecenoyl)-sn-glycero-3-phosphate + CoA. The enzyme catalyses 1-(9Z-octadecenoyl)-sn-glycero-3-phosphate + (5Z,8Z,11Z,14Z)-eicosatetraenoyl-CoA = 1-(9Z)-octadecenoyl-2-(5Z,8Z,11Z,14Z)-eicosatetraenoyl-sn-glycero-3-phosphate + CoA. It catalyses the reaction (5Z,8Z,11Z,14Z)-eicosatetraenoyl-CoA + sn-glycerol 3-phosphate = 1-(5Z,8Z,11Z,14Z-eicosatetraenoyl)-sn-glycero-3-phosphate + CoA. Its pathway is phospholipid metabolism; CDP-diacylglycerol biosynthesis; CDP-diacylglycerol from sn-glycerol 3-phosphate: step 1/3. Its activity is regulated as follows. Inhibited by N-ethylmaleimide (NEM). Its function is as follows. Transfers an acyl-group from acyl-ACP to the sn-1 position of glycerol-3-phosphate producing a lysophosphatidic acid (LPA), an essential step for the triacylglycerol (TAG) and glycerophospholipids. In vitro also transfers an acyl-group from acyl-ACP to the LPA producing a phosphatidic acid (PA). Prefers arachidonoyl-CoA as the acyl donor. Required for primary processing step during piRNA biosynthesis. Molecular mechanisms by which it promotes piRNA biosynthesis are unclear and do not involve its acyltransferase activity. In Mus musculus (Mouse), this protein is Glycerol-3-phosphate acyltransferase 2, mitochondrial.